Consider the following 181-residue polypeptide: Cytidylate kinase (181 aa).

7-15 contributes to the ATP binding site; the sequence is GPPGSGTTS.

The protein belongs to the cytidylate kinase family. Type 2 subfamily.

The protein resides in the cytoplasm. The catalysed reaction is CMP + ATP = CDP + ADP. It catalyses the reaction dCMP + ATP = dCDP + ADP. The sequence is that of Cytidylate kinase from Methanoculleus marisnigri (strain ATCC 35101 / DSM 1498 / JR1).